The chain runs to 542 residues: CTP synthase (542 aa).

The interval 1-265 (MPRYIFITGG…DTEILRCFGI (265 aa)) is amidoligase domain. A CTP-binding site is contributed by S13. A UTP-binding site is contributed by S13. An ATP-binding site is contributed by 14–19 (SLGKGL). Position 54 (Y54) interacts with L-glutamine. Residue D71 participates in ATP binding. Mg(2+) contacts are provided by D71 and E139. CTP-binding positions include 146–148 (DIE), 186–191 (KTKPTQ), and K222. Residues 186-191 (KTKPTQ) and K222 each bind UTP. An ATP-binding site is contributed by 238-240 (RDA). A Glutamine amidotransferase type-1 domain is found at 298–541 (YVGLLDAYKS…IAAALHQSRM (244 aa)). G353 serves as a coordination point for L-glutamine. The active-site Nucleophile; for glutamine hydrolysis is C380. Residues 381–384 (YGMQ), E404, and R469 each bind L-glutamine. Catalysis depends on residues H514 and E516.

The protein belongs to the CTP synthase family. As to quaternary structure, homotetramer.

The catalysed reaction is UTP + L-glutamine + ATP + H2O = CTP + L-glutamate + ADP + phosphate + 2 H(+). It carries out the reaction L-glutamine + H2O = L-glutamate + NH4(+). The enzyme catalyses UTP + NH4(+) + ATP = CTP + ADP + phosphate + 2 H(+). The protein operates within pyrimidine metabolism; CTP biosynthesis via de novo pathway; CTP from UDP: step 2/2. Allosterically activated by GTP, when glutamine is the substrate; GTP has no effect on the reaction when ammonia is the substrate. The allosteric effector GTP functions by stabilizing the protein conformation that binds the tetrahedral intermediate(s) formed during glutamine hydrolysis. Inhibited by the product CTP, via allosteric rather than competitive inhibition. Its function is as follows. Catalyzes the ATP-dependent amination of UTP to CTP with either L-glutamine or ammonia as the source of nitrogen. Regulates intracellular CTP levels through interactions with the four ribonucleotide triphosphates. The protein is CTP synthase of Maricaulis maris (strain MCS10) (Caulobacter maris).